The following is a 169-amino-acid chain: Crossover junction endodeoxyribonuclease RuvC (169 aa).

Active-site residues include Asp11, Glu71, and Asp143. The Mg(2+) site is built by Asp11, Glu71, and Asp143.

Belongs to the RuvC family. In terms of assembly, homodimer which binds Holliday junction (HJ) DNA. The HJ becomes 2-fold symmetrical on binding to RuvC with unstacked arms; it has a different conformation from HJ DNA in complex with RuvA. In the full resolvosome a probable DNA-RuvA(4)-RuvB(12)-RuvC(2) complex forms which resolves the HJ. Mg(2+) is required as a cofactor.

The protein resides in the cytoplasm. The catalysed reaction is Endonucleolytic cleavage at a junction such as a reciprocal single-stranded crossover between two homologous DNA duplexes (Holliday junction).. Its function is as follows. The RuvA-RuvB-RuvC complex processes Holliday junction (HJ) DNA during genetic recombination and DNA repair. Endonuclease that resolves HJ intermediates. Cleaves cruciform DNA by making single-stranded nicks across the HJ at symmetrical positions within the homologous arms, yielding a 5'-phosphate and a 3'-hydroxyl group; requires a central core of homology in the junction. The consensus cleavage sequence is 5'-(A/T)TT(C/G)-3'. Cleavage occurs on the 3'-side of the TT dinucleotide at the point of strand exchange. HJ branch migration catalyzed by RuvA-RuvB allows RuvC to scan DNA until it finds its consensus sequence, where it cleaves and resolves the cruciform DNA. This Bartonella henselae (strain ATCC 49882 / DSM 28221 / CCUG 30454 / Houston 1) (Rochalimaea henselae) protein is Crossover junction endodeoxyribonuclease RuvC.